The following is a 445-amino-acid chain: UDP-N-acetylmuramoylalanine--D-glutamate ligase (445 aa).

110–116 contributes to the ATP binding site; it reads GSNGKTT.

It belongs to the MurCDEF family.

Its subcellular location is the cytoplasm. The catalysed reaction is UDP-N-acetyl-alpha-D-muramoyl-L-alanine + D-glutamate + ATP = UDP-N-acetyl-alpha-D-muramoyl-L-alanyl-D-glutamate + ADP + phosphate + H(+). It functions in the pathway cell wall biogenesis; peptidoglycan biosynthesis. In terms of biological role, cell wall formation. Catalyzes the addition of glutamate to the nucleotide precursor UDP-N-acetylmuramoyl-L-alanine (UMA). The sequence is that of UDP-N-acetylmuramoylalanine--D-glutamate ligase from Christiangramia forsetii (strain DSM 17595 / CGMCC 1.15422 / KT0803) (Gramella forsetii).